A 333-amino-acid chain; its full sequence is Fructose-1,6-bisphosphatase class 1 (333 aa).

Residues Glu-92, Asp-113, Leu-115, and Asp-116 each coordinate Mg(2+). Substrate-binding positions include 116-119, Asn-209, Tyr-242, and Lys-272; that span reads DGSS. A Mg(2+)-binding site is contributed by Glu-278.

This sequence belongs to the FBPase class 1 family. Homotetramer. It depends on Mg(2+) as a cofactor.

It is found in the cytoplasm. The catalysed reaction is beta-D-fructose 1,6-bisphosphate + H2O = beta-D-fructose 6-phosphate + phosphate. It functions in the pathway carbohydrate biosynthesis; Calvin cycle. The sequence is that of Fructose-1,6-bisphosphatase class 1 from Chlorobaculum tepidum (strain ATCC 49652 / DSM 12025 / NBRC 103806 / TLS) (Chlorobium tepidum).